We begin with the raw amino-acid sequence, 334 residues long: Phosphatidylglycerol--prolipoprotein diacylglyceryl transferase (334 aa).

Transmembrane regions (helical) follow at residues 22–42 (FLPF…VVAA), 54–74 (AEPG…IIGA), 105–125 (IWEG…GVGI), and 131–151 (GLRF…AQAI). Arginine 153 is a binding site for a 1,2-diacyl-sn-glycero-3-phospho-(1'-sn-glycerol). 2 consecutive transmembrane segments (helical) span residues 191-211 (LFQP…FVIL) and 251-271 (FLGI…GAII). Residues 296–334 (PQAEVESGETDPEEILHADDDEERTGTHKPQATSLSGSN) form a disordered region. Residues 301 to 318 (ESGETDPEEILHADDDEE) show a composition bias toward acidic residues. Over residues 323-334 (HKPQATSLSGSN) the composition is skewed to polar residues.

It belongs to the Lgt family.

It is found in the cell membrane. It catalyses the reaction L-cysteinyl-[prolipoprotein] + a 1,2-diacyl-sn-glycero-3-phospho-(1'-sn-glycerol) = an S-1,2-diacyl-sn-glyceryl-L-cysteinyl-[prolipoprotein] + sn-glycerol 1-phosphate + H(+). Its pathway is protein modification; lipoprotein biosynthesis (diacylglyceryl transfer). Functionally, catalyzes the transfer of the diacylglyceryl group from phosphatidylglycerol to the sulfhydryl group of the N-terminal cysteine of a prolipoprotein, the first step in the formation of mature lipoproteins. The sequence is that of Phosphatidylglycerol--prolipoprotein diacylglyceryl transferase from Leifsonia xyli subsp. xyli (strain CTCB07).